A 767-amino-acid chain; its full sequence is ATPase family gene 2 protein homolog B (767 aa).

M1 carries the N-acetylmethionine modification. Residues 241–248 (GPPGVGKT) and 507–514 (GPPGCAKT) each bind ATP.

This sequence belongs to the AAA ATPase family. AFG2 subfamily. As to quaternary structure, part of the 55LCC heterohexameric ATPase complex composed at least of AIRIM, AFG2A, AFG2B and CINP. Associates with pre-60S ribosomal particles.

The protein resides in the cytoplasm. The protein localises to the cytoskeleton. It localises to the spindle. It is found in the nucleus. It carries out the reaction ATP + H2O = ADP + phosphate + H(+). Its activity is regulated as follows. In the context of 55LCC heterohexameric ATPase complex, the ATPase activity is stimulated by DNA binding and inhibited in presence of RNA. Its function is as follows. ATP-dependent chaperone part of the 55LCC heterohexameric ATPase complex which is chromatin-associated and promotes replisome proteostasis to maintain replication fork progression and genome stability. Required for replication fork progression, sister chromatid cohesion, and chromosome stability. The ATPase activity is specifically enhanced by replication fork DNA and is coupled to cysteine protease-dependent cleavage of replisome substrates in response to replication fork damage. Uses ATPase activity to process replisome substrates in S-phase, facilitating their proteolytic turnover from chromatin to ensure DNA replication and mitotic fidelity. Plays an essential role in the cytoplasmic maturation steps of pre-60S ribosomal particles by promoting the release of shuttling protein RSL24D1/RLP24 from the pre-ribosomal particles. In Bos taurus (Bovine), this protein is ATPase family gene 2 protein homolog B (AFG2B).